We begin with the raw amino-acid sequence, 349 residues long: DNA polymerase IV (349 aa).

The region spanning 4–185 (IIHIDCDCFY…LPVAKLHGVG (182 aa)) is the UmuC domain. Positions 8 and 103 each coordinate Mg(2+). The active site involves E104.

This sequence belongs to the DNA polymerase type-Y family. Monomer. Mg(2+) is required as a cofactor.

The protein resides in the cytoplasm. The catalysed reaction is DNA(n) + a 2'-deoxyribonucleoside 5'-triphosphate = DNA(n+1) + diphosphate. In terms of biological role, poorly processive, error-prone DNA polymerase involved in untargeted mutagenesis. Copies undamaged DNA at stalled replication forks, which arise in vivo from mismatched or misaligned primer ends. These misaligned primers can be extended by PolIV. Exhibits no 3'-5' exonuclease (proofreading) activity. May be involved in translesional synthesis, in conjunction with the beta clamp from PolIII. The protein is DNA polymerase IV of Pseudomonas paraeruginosa (strain DSM 24068 / PA7) (Pseudomonas aeruginosa (strain PA7)).